A 270-amino-acid polypeptide reads, in one-letter code: 3-methyl-2-oxobutanoate hydroxymethyltransferase (270 aa).

2 residues coordinate Mg(2+): aspartate 41 and aspartate 80. Residues 41–42 (DS), aspartate 80, and lysine 109 each bind 3-methyl-2-oxobutanoate. Position 111 (glutamate 111) interacts with Mg(2+). Glutamate 178 acts as the Proton acceptor in catalysis.

This sequence belongs to the PanB family. In terms of assembly, homodecamer; pentamer of dimers. Mg(2+) is required as a cofactor.

Its subcellular location is the cytoplasm. It carries out the reaction 3-methyl-2-oxobutanoate + (6R)-5,10-methylene-5,6,7,8-tetrahydrofolate + H2O = 2-dehydropantoate + (6S)-5,6,7,8-tetrahydrofolate. It participates in cofactor biosynthesis; (R)-pantothenate biosynthesis; (R)-pantoate from 3-methyl-2-oxobutanoate: step 1/2. Functionally, catalyzes the reversible reaction in which hydroxymethyl group from 5,10-methylenetetrahydrofolate is transferred onto alpha-ketoisovalerate to form ketopantoate. The polypeptide is 3-methyl-2-oxobutanoate hydroxymethyltransferase (Thermotoga maritima (strain ATCC 43589 / DSM 3109 / JCM 10099 / NBRC 100826 / MSB8)).